Consider the following 318-residue polypeptide: MATLEQPYLDLLSKIMSEGHDKEDRTGTGTRSLFGAQMRFDLNDGFPILTTKKIPFGLIKSELLWFLRGDTNIRFLLEHNNHIWDEWAFKNWVESNEYQGPDMTNFGLRSQQDPEFKRIYQEEMKKFDQKVLEDQTFAEKYGNLGDVYGAQWRHWQKREGGFIDQIQNVIDQIKKTPYSRRLIVSAWNPEDVPTSALPPCHVLFQFYVNDGCLSLQLYQRSGDMFLGVPFNIASYALLVNLVARETGLKPGEFIHTLGDAHIYKNHFNQVKELLNRSAYDAPMLWLNPDKKLVQDFEMKDIKLINYRHHGTIKAPVAV.

DUMP-binding positions include Arg25 and 180 to 181 (RR). Catalysis depends on Cys200, which acts as the Nucleophile. Residues 220 to 223 (RSGD), Asn231, and 261 to 263 (HIY) each bind dUMP. Residue Asp223 participates in (6R)-5,10-methylene-5,6,7,8-tetrahydrofolate binding. Ala317 is a binding site for (6R)-5,10-methylene-5,6,7,8-tetrahydrofolate.

It belongs to the thymidylate synthase family. Bacterial-type ThyA subfamily. In terms of assembly, homodimer.

The protein resides in the cytoplasm. It catalyses the reaction dUMP + (6R)-5,10-methylene-5,6,7,8-tetrahydrofolate = 7,8-dihydrofolate + dTMP. It functions in the pathway pyrimidine metabolism; dTTP biosynthesis. In terms of biological role, catalyzes the reductive methylation of 2'-deoxyuridine-5'-monophosphate (dUMP) to 2'-deoxythymidine-5'-monophosphate (dTMP) while utilizing 5,10-methylenetetrahydrofolate (mTHF) as the methyl donor and reductant in the reaction, yielding dihydrofolate (DHF) as a by-product. This enzymatic reaction provides an intracellular de novo source of dTMP, an essential precursor for DNA biosynthesis. This is Thymidylate synthase from Lactobacillus johnsonii (strain CNCM I-12250 / La1 / NCC 533).